Consider the following 107-residue polypeptide: Universal stress protein B homolog (107 aa).

A run of 2 helical transmembrane segments spans residues 6–26 and 86–106; these read TILFALMVVTGVNMIRYLTAL and VRELFVLSTALLGVTLLAAFI.

It belongs to the universal stress protein B family.

It localises to the cell inner membrane. The polypeptide is Universal stress protein B homolog (Vibrio parahaemolyticus serotype O3:K6 (strain RIMD 2210633)).